Consider the following 73-residue polypeptide: MGKKEEAFEVEGTVTQALANTRFRVQLETGNEVMAHVAGRMRKHFIRIVPGDKVRVELSPYDLTKGRIVYRER.

The S1-like domain occupies Met-1–Arg-73.

It belongs to the IF-1 family. Component of the 30S ribosomal translation pre-initiation complex which assembles on the 30S ribosome in the order IF-2 and IF-3, IF-1 and N-formylmethionyl-tRNA(fMet); mRNA recruitment can occur at any time during PIC assembly.

It localises to the cytoplasm. In terms of biological role, one of the essential components for the initiation of protein synthesis. Stabilizes the binding of IF-2 and IF-3 on the 30S subunit to which N-formylmethionyl-tRNA(fMet) subsequently binds. Helps modulate mRNA selection, yielding the 30S pre-initiation complex (PIC). Upon addition of the 50S ribosomal subunit IF-1, IF-2 and IF-3 are released leaving the mature 70S translation initiation complex. This is Translation initiation factor IF-1 from Rhodopirellula baltica (strain DSM 10527 / NCIMB 13988 / SH1).